A 103-amino-acid polypeptide reads, in one-letter code: Cystatin-A (103 aa).

At M1 the chain carries N-acetylmethionine. The Secondary area of contact motif lies at 52–56; the sequence is QVVAG.

The protein belongs to the cystatin family.

It localises to the cytoplasm. This is an intracellular thiol proteinase inhibitor. The sequence is that of Cystatin-A (Csta) from Rattus norvegicus (Rat).